The following is a 159-amino-acid chain: Ribosomal RNA large subunit methyltransferase H (159 aa).

S-adenosyl-L-methionine contacts are provided by residues Leu-76, Gly-108, and 127 to 132 (FGLLTL).

The protein belongs to the RNA methyltransferase RlmH family. Homodimer.

Its subcellular location is the cytoplasm. The enzyme catalyses pseudouridine(1915) in 23S rRNA + S-adenosyl-L-methionine = N(3)-methylpseudouridine(1915) in 23S rRNA + S-adenosyl-L-homocysteine + H(+). Functionally, specifically methylates the pseudouridine at position 1915 (m3Psi1915) in 23S rRNA. This chain is Ribosomal RNA large subunit methyltransferase H, found in Streptococcus equi subsp. zooepidemicus (strain H70).